The chain runs to 179 residues: Calcineurin subunit B type 2 (179 aa).

Gly2 carries N-myristoyl glycine lipidation. EF-hand domains follow at residues 18 to 53 (EEIR…QQNP), 57 to 85 (RVID…FSVK), 87 to 122 (DEEQ…MVGN), and 128 to 163 (QLQQ…MEIH). Positions 31, 33, 35, 37, 42, 63, 65, 67, 69, 74, 100, 102, 104, and 111 each coordinate Ca(2+). The tract at residues 131-136 (QLVDKS) is calcineurin A binding. Residues Asp141, Asp143, Asp145, Arg147, and Glu152 each coordinate Ca(2+).

It belongs to the calcineurin regulatory subunit family. Forms a complex composed of a calmodulin-dependent catalytic subunit (also known as calcineurin A) and a regulatory Ca(2+)-binding subunit (also known as calcineurin B). There are three catalytic subunits, each encoded by a separate gene (PPP3CA, PPP3CB, and PPP3CC) and two regulatory subunits which are also encoded by separate genes (PPP3R1 and PPP3R2). Interacts with SPATA33 (via PQIIIT motif). In terms of tissue distribution, expressed in osteoblasts and bone marrow (at protein level). Expressed in the testis. Expressed in the sperm midpiece in a SPATA33-dependent manner (at protein level).

It is found in the mitochondrion. Its function is as follows. Regulatory subunit of calcineurin, a calcium-dependent, calmodulin stimulated protein phosphatase. Confers calcium sensitivity. This chain is Calcineurin subunit B type 2 (Ppp3r2), found in Mus musculus (Mouse).